The chain runs to 424 residues: Transcription regulator spe-44 (424 aa).

Positions 65 to 150 (PLQITIPEGD…RTHMEAMTID (86 aa)) constitute an SAND domain. 2 disordered regions span residues 178 to 228 (ARKS…KPRQ) and 371 to 394 (EHSVKYQPRTSSSSQESLHTAREF). Positions 192-210 (YEIENEMAGKEADNDDNRK) are enriched in basic and acidic residues. Residues 378–388 (PRTSSSSQESL) show a composition bias toward polar residues.

The protein resides in the chromosome. It localises to the nucleus. Its function is as follows. Transcription factor which controls spermatogenesis and sperm cell fate by regulation of sperm gene expression. The polypeptide is Transcription regulator spe-44 (Caenorhabditis elegans).